The sequence spans 21 residues: Putative sperm adenylate cyclase (21 aa).

It catalyses the reaction ATP = 3',5'-cyclic AMP + diphosphate. The polypeptide is Putative sperm adenylate cyclase (Mus musculus (Mouse)).